The following is a 613-amino-acid chain: MIQVLLVTLCLAAFPYQGSSIILDSGNVNDYEVVYPRKVTALPKGAVQPKYEDTMQYEFKVNGEPVVLHLEKNKGLFSEDYSETHYSPDGREITTYPSIEDHCYYRGRIQNDADSTASISACNGLKGHFKLQGEMYLIEPLKLPDSEAHAVYKYENIEKEDEAPKMCGVTQTNWKSDEPIKKASQLVVTPEEQRYLNTKKYIELVIVADNVMVKKYTSNSTAIRTRIYACVNTLNLIYRAFNIYIALIGLEIWSNRDLINVQSASSVTLDLFGTWRETVLLRHKRHDNAQLLTGINFDGDTVGLAYVGSMCDPKRSAGIIQDHNKLDVMVAIAMAHELGHDLGINHDGNQCNCGGNPCIMSATLNFEPVYRFSDCSRDEHWRYLIDNRPPCILNKPSITDIVSPPVCGNYFVEVGEECDCGLPAHCQNPCCDAATCKLRPETQCEDGECCEQCQFTRAGTECRAARSECDIAESCTGQSAECPTDDFQRNGQPCLNNNGYCYNGTCPILTNQCISFFGSSATVAPDVCFDFNLQGQGNFYCRRERARIFPCAPQDKKCGRLFCVKGPIGNTISCQSTSSQSDLDIGMVDLGTKCGDGRVCNSNRQCVDVNTAY.

Positions 1-20 are cleaved as a signal peptide; sequence MIQVLLVTLCLAAFPYQGSS. Residues 21 to 190 constitute a propeptide that is removed on maturation; the sequence is IILDSGNVND…KKASQLVVTP (170 aa). In terms of domain architecture, Peptidase M12B spans 200-396; that stretch reads KYIELVIVAD…NRPPCILNKP (197 aa). A Ca(2+)-binding site is contributed by E203. N219 carries an N-linked (GlcNAc...) asparagine glycan. D287 serves as a coordination point for Ca(2+). 3 disulfides stabilise this stretch: C311–C391, C351–C375, and C353–C358. H336 is a Zn(2+) binding site. The active site involves E337. The Zn(2+) site is built by H340 and H346. The Ca(2+) site is built by C391, N394, V406, N409, F411, E413, E416, and D419. The 87-residue stretch at 404 to 490 folds into the Disintegrin domain; sequence PPVCGNYFVE…ECPTDDFQRN (87 aa). 14 cysteine pairs are disulfide-bonded: C407-C436, C418-C431, C420-C426, C430-C453, C444-C450, C449-C475, C462-C482, C469-C501, C494-C506, C513-C563, C528-C574, C541-C551, C558-C600, and C594-C606. The short motif at 468–470 is the D/ECD-tripeptide element; the sequence is ECD. N-linked (GlcNAc...) asparagine glycosylation is present at N503.

This sequence belongs to the venom metalloproteinase (M12B) family. P-III subfamily. P-IIIa sub-subfamily. Monomer. The cofactor is Zn(2+). As to expression, expressed by the venom gland.

The protein resides in the secreted. Functionally, snake venom metalloproteinase that impairs hemostasis in the envenomed animal. This is Zinc metalloproteinase-disintegrin-like VMP-III from Agkistrodon piscivorus leucostoma (Western cottonmouth).